Here is a 2564-residue protein sequence, read N- to C-terminus: Highly reducing polyketide synthase 40 (2564 aa).

A Ketosynthase family 3 (KS3) domain is found at 8–432; sequence PEPIAIIGMS…GTNAHVIVDR (425 aa). Residues Cys181, His317, and His358 each act as for beta-ketoacyl synthase activity in the active site. Residues 435-482 are disordered; that stretch reads EHNHSNGTNGTNGTHHHNGTNGSNGNGTNGTNGTNGTDGFHDTESISD. Low complexity predominate over residues 439–455; it reads SNGTNGTNGTHHHNGTN. The segment covering 473–482 has biased composition (basic and acidic residues); sequence GFHDTESISD. Residues 580-914 form a malonyl-CoA:ACP transacylase (MAT) domain region; that stretch reads YVFGGQGAQY…SAAENMLRTL (335 aa). The interval 973–1113 is N-terminal hotdog fold; it reads HELLGNLSAD…GRIRAVVDQG (141 aa). Positions 973–1280 are dehydratase (DH) domain; the sequence is HELLGNLSAD…GLRTAQLPSD (308 aa). The PKS/mFAS DH domain maps to 973–1283; that stretch reads HELLGNLSAD…TAQLPSDVVN (311 aa). His1005 serves as the catalytic Proton acceptor; for dehydratase activity. Residues 1130–1283 are C-terminal hotdog fold; it reads AASVPHHITS…TAQLPSDVVN (154 aa). Asp1199 functions as the Proton donor; for dehydratase activity in the catalytic mechanism. Residues 1451–1556 are methyltransferase (CMet) domain; sequence LEVGGGTASA…RQLLRPGGTL (106 aa). The enoyl reductase (ER) domain stretch occupies residues 1854 to 2167; the sequence is GLLETFRWVD…AGKHMGKVIL (314 aa). The segment at 2191 to 2370 is ketoreductase (KR) domain; the sequence is ATYLLVGGFG…SFAIDVGVVS (180 aa). Residues 2472–2549 form the Carrier domain; sequence EALDAVGQAV…ELIHLVAGKS (78 aa). O-(pantetheine 4'-phosphoryl)serine is present on Ser2509.

Its pathway is secondary metabolite biosynthesis. Highly reducing polyketide synthase; part of the gene cluster that mediates the biosynthesis of the lipopeptides W493 A and B. W493 A and B consist of six amino acid residues D-allo-thr, L-Ala, D-Ala, L-Gln, D-Tyr, and L-Val/L-Ile linked to a 3-hydroxy-4-methyltetradecanoic acid polyketide chain. The biosynthesis starts with formation of the linear polyketide chain by the highly reducing polyketide synthase PKS40. The gene cluster contains a putative acyl-CoA ligase (FPSE_09184) for formation of a CoA thioester polyketide. The thiol bond could be hydrolyzed by the putative thioesterase (FPSE_09186) and then accepted by the first T domain in module 1 of NRPS32. The second T domain is responsible for accepting a threonine, which is adenylated by the A domain and epimerized to the D-allo-threonine formed by the E domain. The five successive modules incorporate Ala, Ala, Gln, Tyr, and Val/Ile into the final product, which is released by cyclization. The chain is Highly reducing polyketide synthase 40 from Fusarium pseudograminearum (strain CS3096) (Wheat and barley crown-rot fungus).